The sequence spans 297 residues: Glycerol-3-phosphate dehydrogenase [NAD(P)+] (297 aa).

Residues tryptophan 11, arginine 33, and lysine 79 each coordinate NADPH. Sn-glycerol 3-phosphate is bound by residues lysine 79, glycine 107, and serine 109. Alanine 111 provides a ligand contact to NADPH. 5 residues coordinate sn-glycerol 3-phosphate: lysine 161, aspartate 214, serine 224, arginine 225, and asparagine 226. Lysine 161 (proton acceptor) is an active-site residue. An NADPH-binding site is contributed by arginine 225. Residues valine 249 and glutamate 251 each contribute to the NADPH site.

It belongs to the NAD-dependent glycerol-3-phosphate dehydrogenase family.

It is found in the cytoplasm. It carries out the reaction sn-glycerol 3-phosphate + NAD(+) = dihydroxyacetone phosphate + NADH + H(+). The catalysed reaction is sn-glycerol 3-phosphate + NADP(+) = dihydroxyacetone phosphate + NADPH + H(+). It participates in membrane lipid metabolism; glycerophospholipid metabolism. Catalyzes the reduction of the glycolytic intermediate dihydroxyacetone phosphate (DHAP) to sn-glycerol 3-phosphate (G3P), the key precursor for phospholipid synthesis. This Campylobacter jejuni subsp. jejuni serotype O:6 (strain 81116 / NCTC 11828) protein is Glycerol-3-phosphate dehydrogenase [NAD(P)+].